The primary structure comprises 256 residues: Tetraspanin-32 (256 aa).

Helical transmembrane passes span 15-35 (LITNFLVLLLGLSMATMVVVI), 61-81 (AFYVGISLAGLLSLGAALSTI), 90-110 (LMAAGFLCFALSFCILVQVAF), and 203-223 (CTSLALTVYAMMLCAFLWFAI).

This sequence belongs to the tetraspanin (TM4SF) family. Expressed exclusively in hematopoietic tissues. Expression detected in spleen, thymus, bone marrow and peripheral blood leukocytes but not in heart, brain, lung, liver, kidney or testis.

It is found in the membrane. This Mus musculus (Mouse) protein is Tetraspanin-32 (Tspan32).